The primary structure comprises 149 residues: Arginine repressor (149 aa).

This sequence belongs to the ArgR family.

It is found in the cytoplasm. It participates in amino-acid biosynthesis; L-arginine biosynthesis [regulation]. In terms of biological role, regulates arginine biosynthesis genes. The sequence is that of Arginine repressor from Chlorobaculum parvum (strain DSM 263 / NCIMB 8327) (Chlorobium vibrioforme subsp. thiosulfatophilum).